Reading from the N-terminus, the 832-residue chain is Prickle-like protein 1 (832 aa).

The 109-residue stretch at F14–M122 folds into the PET domain. LIM zinc-binding domains follow at residues A124–K188, P189–E249, and Y250–H313. The interval A314 to S342 is disordered. S315, S592, and S595 each carry phosphoserine. Disordered stretches follow at residues H663–L688 and S765–S832. Residues R670–K681 show a composition bias toward basic residues. Phosphoserine is present on S684. Residues D798–T815 are compositionally biased toward polar residues. The span at T816–S832 shows a compositional bias: basic residues. C829 carries the post-translational modification Cysteine methyl ester. C829 is lipidated: S-farnesyl cysteine. Residues I830–S832 constitute a propeptide, removed in mature form.

It belongs to the prickle / espinas / testin family. As to quaternary structure, interacts with REST.

Its subcellular location is the nucleus membrane. The protein localises to the cytoplasm. It localises to the cytosol. In terms of biological role, involved in the planar cell polarity pathway that controls convergent extension during gastrulation and neural tube closure. Convergent extension is a complex morphogenetic process during which cells elongate, move mediolaterally, and intercalate between neighboring cells, leading to convergence toward the mediolateral axis and extension along the anteroposterior axis. Necessary for nuclear localization of REST. May serve as nuclear receptor. The polypeptide is Prickle-like protein 1 (Prickle1) (Mus musculus (Mouse)).